Here is a 277-residue protein sequence, read N- to C-terminus: Large ribosomal subunit protein uL2 (277 aa).

Disordered regions lie at residues 37-60 and 223-264; these read KNST…GHKH and VVMN…NKRT. The span at 39-49 shows a compositional bias: polar residues; that stretch reads STAGRNNNGHI. The segment covering 50–60 has biased composition (basic residues); sequence TTRHKGGGHKH. Residues 229–244 are compositionally biased toward basic and acidic residues; sequence DHPHGGGEGRTGEARE.

It belongs to the universal ribosomal protein uL2 family. In terms of assembly, part of the 50S ribosomal subunit. Forms a bridge to the 30S subunit in the 70S ribosome.

One of the primary rRNA binding proteins. Required for association of the 30S and 50S subunits to form the 70S ribosome, for tRNA binding and peptide bond formation. It has been suggested to have peptidyltransferase activity; this is somewhat controversial. Makes several contacts with the 16S rRNA in the 70S ribosome. This chain is Large ribosomal subunit protein uL2, found in Neisseria gonorrhoeae (strain ATCC 700825 / FA 1090).